We begin with the raw amino-acid sequence, 297 residues long: Signal-transducing adaptor protein 1 (297 aa).

The PH domain occupies 25-121 (PLYFEGFLLV…WRGFILTVTE (97 aa)). Residue tyrosine 170 is modified to Phosphotyrosine. Positions 179–273 (ECFYAVSRKE…GNLRPFIHSA (95 aa)) constitute an SH2 domain. The segment at 271–297 (HSADDNFGQDPNIEDRSEKFKKNPHNA) is disordered.

As to quaternary structure, interacts with URI1; the interaction is phosphorylation-dependent occurs in a growth-dependent manner. Interacts with KIT and CSF1R. In terms of processing, phosphorylated on tyrosine by TEC. Phosphorylated on tyrosine by KIT. Expression restricted to the bone marrow.

The protein resides in the nucleus. The protein localises to the cytoplasm. It localises to the mitochondrion. May function as an adapter molecule downstream of KIT in the proliferation or differentiation of hematopoietic stem cells. In Mus musculus (Mouse), this protein is Signal-transducing adaptor protein 1 (Stap1).